The following is an 83-amino-acid chain: UPF0147 protein TK2131 (83 aa).

The protein belongs to the UPF0147 family.

This is UPF0147 protein TK2131 from Thermococcus kodakarensis (strain ATCC BAA-918 / JCM 12380 / KOD1) (Pyrococcus kodakaraensis (strain KOD1)).